The sequence spans 403 residues: Ribosomal RNA large subunit methyltransferase I (403 aa).

The PUA domain occupies Tyr9 to Arg88.

Belongs to the methyltransferase superfamily. RlmI family.

Its subcellular location is the cytoplasm. The catalysed reaction is cytidine(1962) in 23S rRNA + S-adenosyl-L-methionine = 5-methylcytidine(1962) in 23S rRNA + S-adenosyl-L-homocysteine + H(+). Its function is as follows. Specifically methylates the cytosine at position 1962 (m5C1962) of 23S rRNA. In Salmonella paratyphi A (strain ATCC 9150 / SARB42), this protein is Ribosomal RNA large subunit methyltransferase I.